A 311-amino-acid polypeptide reads, in one-letter code: Methionyl-tRNA formyltransferase (311 aa).

109-112 contributes to the (6S)-5,6,7,8-tetrahydrofolate binding site; the sequence is SLLP.

Belongs to the Fmt family.

It catalyses the reaction L-methionyl-tRNA(fMet) + (6R)-10-formyltetrahydrofolate = N-formyl-L-methionyl-tRNA(fMet) + (6S)-5,6,7,8-tetrahydrofolate + H(+). In terms of biological role, attaches a formyl group to the free amino group of methionyl-tRNA(fMet). The formyl group appears to play a dual role in the initiator identity of N-formylmethionyl-tRNA by promoting its recognition by IF2 and preventing the misappropriation of this tRNA by the elongation apparatus. The protein is Methionyl-tRNA formyltransferase of Marinobacter nauticus (strain ATCC 700491 / DSM 11845 / VT8) (Marinobacter aquaeolei).